The primary structure comprises 597 residues: MAEGSAVSDPQHAARLLRALSSFREEARFCDAHLVLDGEEIPVQKNILAAASPYIRTKLNYNPPKDDGSTYKIELEGISVMVMREILDYIFSGQIRLNEDTIQDVVQAADLLLLTDLKTLCCEFLEGCIAAENCIGIRDFALHYCLHHVHYLATEYLETHFRDVSSTEEFLELSPQKLKEVISLEKLNVGNERYVFEAVIRWIAHDVEMRKVHMKDVMSALWVSGLDSSYLREQMLNEPLVREIVKECSNIPLSQPQQGEAMLASFKPRGYSECIVTIGGEERVSRKPTAAMRCMCPLYDPNRQLWIELAPLSMPRINHGVLSAEGFLFVLGGQDENKQTLSSGEKYDPDANTWTALPPMHEARHNFGIVEIDGMLYILGGEDGDRELISMECYDIYSKTWTKQPDLTMVRKIGCYAAMKKKIYAMGGGSYGKLFESVECYDPRTQQWTAICPLKERRFGAVACGVAMELYVFGGVRSREDIQGSEMVTCKSEFYHDEFKRWIYLNDQNLCIPASSSFVYGAVPIGASIYVIGDLDTGTNYDYVREFKRSTGTWHHTKPLLPSDLRRTGCAALRIANCKLFRLQLQQGLFRIRVHSP.

A BTB domain is found at 30–99 (CDAHLVLDGE…IFSGQIRLNE (70 aa)). Residues 134-236 (CIGIRDFALH…DSSYLREQML (103 aa)) form the BACK domain. Kelch repeat units follow at residues 274 to 326 (CIVT…SAEG), 327 to 374 (FLFV…EIDG), 376 to 421 (LYIL…AMKK), 422 to 468 (KIYA…GVAM), 470 to 522 (LYVF…VYGA), and 528 to 574 (SIYV…AALR).

In terms of assembly, interacts with TBCB. Interacts with CUL3. Part of a complex that contains CUL3, RBX1 and GAN. Interacts (via BTB domain) with UBA1. Interacts (via Kelch domains) with MAP1B (via C-terminus) and MAP1S (via C-terminus). Ubiquitinated by E3 ubiquitin ligase complex formed by CUL3 and RBX1 and probably targeted for proteasome-independent degradation. In terms of tissue distribution, expressed in brain, heart and muscle (at protein level).

The protein resides in the cytoplasm. The protein localises to the cytoskeleton. Its pathway is protein modification; protein ubiquitination. Functionally, probable cytoskeletal component that directly or indirectly plays an important role in neurofilament architecture. May act as a substrate-specific adapter of an E3 ubiquitin-protein ligase complex which mediates the ubiquitination and subsequent proteasomal degradation of target proteins. Controls degradation of TBCB. Controls degradation of MAP1B and MAP1S, and is critical for neuronal maintenance and survival. This is Gigaxonin from Mus musculus (Mouse).